Reading from the N-terminus, the 509-residue chain is Mitogen-activated protein kinase sma-5 (509 aa).

A disordered region spans residues 19-72 (DPITSMSPPQENRSPKAEYLNNFFNTNPTNGKSRGSQEAPRKPLGQTNLNVQGS). Composition is skewed to polar residues over residues 20–30 (PITSMSPPQEN) and 40–54 (NFFN…SRGS). Positions 105 to 411 (YEPTQNIGSG…IQDALLHPYI (307 aa)) constitute a Protein kinase domain. Residues 111–119 (IGSGAFGIV) and Lys134 each bind ATP. Asp231 functions as the Proton acceptor in the catalytic mechanism. A disordered region spans residues 460-482 (YSELHSGDSTGSTSDMSTNTSGE). A compositionally biased stretch (low complexity) spans 466-481 (GDSTGSTSDMSTNTSG).

This sequence belongs to the protein kinase superfamily. CMGC Ser/Thr protein kinase family. MAP kinase subfamily. Mg(2+) serves as cofactor. In terms of tissue distribution, expressed in intestine with a stronger expression in the four most anterior cells, muscles, excretory cell, pharynx and, to a lesser extent, in hypodermis.

The enzyme catalyses L-seryl-[protein] + ATP = O-phospho-L-seryl-[protein] + ADP + H(+). It catalyses the reaction L-threonyl-[protein] + ATP = O-phospho-L-threonyl-[protein] + ADP + H(+). Its function is as follows. Serine/threonine-protein kinase involved in the postembryonic regulation of body size, mainly through control of cell growth. In particular, controls the volume of intestine, muscles and hypodermis. In addition, regulates growth, intestinal granule distribution, lifespan and number of offspring. The protein is Mitogen-activated protein kinase sma-5 of Caenorhabditis elegans.